We begin with the raw amino-acid sequence, 93 residues long: Long neurotoxin 1 (93 aa).

A signal peptide spans 1–21; sequence MKTLLLTLVVVTIVCLDLGNS. 5 disulfides stabilise this stretch: Cys-24–Cys-42, Cys-35–Cys-63, Cys-48–Cys-52, Cys-67–Cys-78, and Cys-79–Cys-84.

The protein belongs to the three-finger toxin family. Long-chain subfamily. Type II alpha-neurotoxin sub-subfamily. In terms of tissue distribution, expressed by the venom gland.

It localises to the secreted. Its function is as follows. Binds with high affinity to muscular (alpha-1/CHRNA1) and neuronal (alpha-7/CHRNA7) nicotinic acetylcholine receptor (nAChR) and inhibits acetylcholine from binding to the receptor, thereby impairing neuromuscular and neuronal transmission. The sequence is that of Long neurotoxin 1 from Tropidechis carinatus (Australian rough-scaled snake).